We begin with the raw amino-acid sequence, 417 residues long: Interferon-gamma-inducible GTPase 10 (417 aa).

Gly2 is lipidated: N-myristoyl glycine. Residues 67–249 enclose the IRG-type G domain; the sequence is APLNIAVTGE…PSLESTLLEE (183 aa). The GDP site is built by Gly78, Ala79, Ser82, Thr83, Ser101, Lys183, Asp185, and Ser231. The next 2 membrane-spanning stretches (helical) occupy residues 284–302 and 370–387; these read EALK…FFND and AVTG…KSYY.

The protein belongs to the TRAFAC class dynamin-like GTPase superfamily. GB1/RHD3 GTPase family. GB1 subfamily. In terms of assembly, homooligomer; homooligomerization occurs upon GTP-binding and is required for the association with membranous structures. Homodimer; GDP-binding induces formation of an inactive head-to-head homodimer. In terms of processing, myristoylation is required for localization to pathogen-containing vacuoles. Post-translationally, (Microbial infection) Phosphorylated by Toxoplasma gondii ROP18.

It is found in the membrane. The protein resides in the cytoplasmic vesicle membrane. It carries out the reaction GTP + H2O = GDP + phosphate + H(+). Functionally, interferon (IFN)-inducible GTPase that plays important roles in innate immunity against a diverse range of bacterial, viral and protozoan pathogens by mediating cytosolic release of pathogenic ligands that activate the inflammasomes. Following infection, recruited to the membrane of pathogens in a GBP-dependent manner and mediates disruption of the pathogen membrane, liberating ligands that are detected by inflammasomes, such as lipopolysaccharide (LPS) that activates the non-canonical CASP4/CASP11 inflammasome or double-stranded DNA (dsDNA) that activates the AIM2 inflammasome. Promotes AIM2 and NLRP3 inflammasome activation following A.fumigatus infection by liberating beta-glucan, which directly triggers inflammasome assembly. Promotes NLRP3 inflammasome activation following influenza A virus infection. This Mus musculus (Mouse) protein is Interferon-gamma-inducible GTPase 10.